We begin with the raw amino-acid sequence, 78 residues long: MGLLGELLLLPAAPLRGTAWVLRQVVAEAERQYYDPAAVQRELARLNELLEAGEIDEEEFDRREDELLDRLEKGPRQS.

Belongs to the gas vesicle GvpG family.

It localises to the gas vesicle. Its function is as follows. Might be a minor component of the gas vesicle involved in nucleating their formation. Gas vesicles are hollow, gas filled proteinaceous nanostructures found in some microorganisms. It is not clear what function gas vesicles perform in soil bacteria. The protein is Gas vesicle protein G of Streptomyces sp. (strain CB03234).